The chain runs to 230 residues: Acyl-protein thioesterase 1 (230 aa).

Active-site charge relay system residues include Ser119, Asp174, and His208. An N6-acetyllysine modification is found at Lys224.

It belongs to the AB hydrolase superfamily. AB hydrolase 2 family. Homodimer.

It is found in the cytoplasm. The protein localises to the cell membrane. The protein resides in the nucleus membrane. It localises to the endoplasmic reticulum. It carries out the reaction S-hexadecanoyl-L-cysteinyl-[protein] + H2O = L-cysteinyl-[protein] + hexadecanoate + H(+). It catalyses the reaction 1-hexadecanoyl-sn-glycero-3-phosphocholine + H2O = sn-glycerol 3-phosphocholine + hexadecanoate + H(+). The enzyme catalyses a 1-(9Z-octadecenoyl)-2-acyl-sn-glycero-3-phosphocholine + H2O = a 2-acyl-sn-glycero-3-phosphocholine + (9Z)-octadecenoate + H(+). Functionally, acts as an acyl-protein thioesterase. Hydrolyzes fatty acids from S-acylated cysteine residues in proteins such as trimeric G alpha proteins or HRAS. Acts as a palmitoyl thioesterase that catalyzes depalmitoylation of proteins, such as ADRB2, KCNMA1 and SQSTM1. Acts as a negative regulator of autophagy by mediating palmitoylation of SQSTM1, decreasing affinity between SQSTM1 and ATG8 proteins and recruitment of ubiquitinated cargo proteins to autophagosomes. Acts as a lysophospholipase and hydrolyzes lysophosphatidylcholine (lyso-PC). Also hydrolyzes lysophosphatidylethanolamine (lyso-PE), lysophosphatidylinositol (lyso-PI) and lysophosphatidylserine (lyso-PS). Has much higher thioesterase activity than lysophospholipase activity. Contributes to the production of lysophosphatidic acid (LPA) during blood coagulation by recognizing and cleaving plasma phospholipids to generate lysophospholipids which in turn act as substrates for ENPP2 to produce LPA. The polypeptide is Acyl-protein thioesterase 1 (Lypla1) (Mus musculus (Mouse)).